We begin with the raw amino-acid sequence, 298 residues long: Glycine--tRNA ligase alpha subunit (298 aa).

It belongs to the class-II aminoacyl-tRNA synthetase family. In terms of assembly, tetramer of two alpha and two beta subunits.

It localises to the cytoplasm. The enzyme catalyses tRNA(Gly) + glycine + ATP = glycyl-tRNA(Gly) + AMP + diphosphate. This chain is Glycine--tRNA ligase alpha subunit, found in Neisseria meningitidis serogroup C / serotype 2a (strain ATCC 700532 / DSM 15464 / FAM18).